A 388-amino-acid polypeptide reads, in one-letter code: Mitochondrial distribution and morphology protein 12 (388 aa).

The SMP-LTD domain occupies 1–388 (MSLDINWSLL…VFPNFHTVAL (388 aa)). Disordered regions lie at residues 75 to 101 (DDEGDFAEEEKQREKEREERDKLRNEA) and 209 to 249 (PMSI…KVSS). Residues 83-101 (EEKQREKEREERDKLRNEA) show a composition bias toward basic and acidic residues. Residues 234 to 243 (PSPPAHPAGL) show a composition bias toward pro residues.

Belongs to the MDM12 family. Component of the ER-mitochondria encounter structure (ERMES) or MDM complex, composed of MMM1, MDM10, MDM12 and MDM34. An MMM1 homodimer associates with one molecule of MDM12 on each side in a pairwise head-to-tail manner, and the SMP-LTD domains of MMM1 and MDM12 generate a continuous hydrophobic tunnel for phospholipid trafficking.

The protein resides in the mitochondrion outer membrane. It localises to the endoplasmic reticulum membrane. Its function is as follows. Component of the ERMES/MDM complex, which serves as a molecular tether to connect the endoplasmic reticulum (ER) and mitochondria. Components of this complex are involved in the control of mitochondrial shape and protein biogenesis, and function in nonvesicular lipid trafficking between the ER and mitochondria. MDM12 is required for the interaction of the ER-resident membrane protein MMM1 and the outer mitochondrial membrane-resident beta-barrel protein MDM10. The MDM12-MMM1 subcomplex functions in the major beta-barrel assembly pathway that is responsible for biogenesis of all mitochondrial outer membrane beta-barrel proteins, and acts in a late step after the SAM complex. The MDM10-MDM12-MMM1 subcomplex further acts in the TOM40-specific pathway after the action of the MDM12-MMM1 complex. Essential for establishing and maintaining the structure of mitochondria and maintenance of mtDNA nucleoids. The polypeptide is Mitochondrial distribution and morphology protein 12 (Cryptococcus neoformans var. neoformans serotype D (strain JEC21 / ATCC MYA-565) (Filobasidiella neoformans)).